A 31-amino-acid chain; its full sequence is Cyclotide mden-M (31 aa).

Residues 1 to 31 (GTIPCGESCVYIPCITSALGCSCKKKVCYKN) constitute a cross-link (cyclopeptide (Gly-Asn)). 3 disulfides stabilise this stretch: Cys5-Cys21, Cys9-Cys23, and Cys14-Cys28.

Belongs to the cyclotide family. Bracelet subfamily. In terms of processing, this is a cyclic peptide.

Functionally, probably participates in a plant defense mechanism. In Melicytus dentatus (Tree violet), this protein is Cyclotide mden-M.